A 344-amino-acid chain; its full sequence is tRNA N6-adenosine threonylcarbamoyltransferase (344 aa).

Fe cation contacts are provided by His-119 and His-123. Residues 141–145 (VVSGG), Asp-174, Gly-187, Asp-191, and Asn-280 contribute to the substrate site. A Fe cation-binding site is contributed by Asp-310.

Belongs to the KAE1 / TsaD family. Fe(2+) is required as a cofactor.

The protein localises to the cytoplasm. The enzyme catalyses L-threonylcarbamoyladenylate + adenosine(37) in tRNA = N(6)-L-threonylcarbamoyladenosine(37) in tRNA + AMP + H(+). Required for the formation of a threonylcarbamoyl group on adenosine at position 37 (t(6)A37) in tRNAs that read codons beginning with adenine. Is involved in the transfer of the threonylcarbamoyl moiety of threonylcarbamoyl-AMP (TC-AMP) to the N6 group of A37, together with TsaE and TsaB. TsaD likely plays a direct catalytic role in this reaction. The protein is tRNA N6-adenosine threonylcarbamoyltransferase of Listeria monocytogenes serotype 4b (strain CLIP80459).